We begin with the raw amino-acid sequence, 207 residues long: Ribonuclease HII (207 aa).

Residues 18-207 enclose the RNase H type-2 domain; it reads GLVAGVDEAG…VAEVLREALP (190 aa). A divalent metal cation contacts are provided by Asp-24, Glu-25, and Asp-116.

Belongs to the RNase HII family. The cofactor is Mn(2+). Requires Mg(2+) as cofactor.

It localises to the cytoplasm. The catalysed reaction is Endonucleolytic cleavage to 5'-phosphomonoester.. In terms of biological role, endonuclease that specifically degrades the RNA of RNA-DNA hybrids. The sequence is that of Ribonuclease HII from Albidiferax ferrireducens (strain ATCC BAA-621 / DSM 15236 / T118) (Rhodoferax ferrireducens).